Here is a 137-residue protein sequence, read N- to C-terminus: Type III secretion protein HrcQb (137 aa).

Positions 1–22 (MSTEDLYQDDVESLEDYDDETA) are enriched in acidic residues. A disordered region spans residues 1-67 (MSTEDLYQDD…EQQAPSGLDS (67 aa)). Residues 23–33 (EQEHEHEHEQQ) show a composition bias toward basic and acidic residues. Over residues 36–58 (EPDDESEYAEAEPDDDEQEEQEE) the composition is skewed to acidic residues.

Belongs to the FliN/MopA/SpaO family. As to quaternary structure, homotetramer. The four monomers assemble into two tightly bound homodimers. Interacts with HrcQa.

The protein resides in the cytoplasm. Functionally, component of the type III secretion system, which is required for effector protein delivery, parasitism, and pathogenicity. Probably participates in the formation of a C-ring-like assembly along with HrcQa. This chain is Type III secretion protein HrcQb (hrcQb), found in Pseudomonas syringae pv. tomato (strain ATCC BAA-871 / DC3000).